The primary structure comprises 483 residues: ATP synthase subunit beta, chloroplastic (483 aa).

163–170 (GGAGVGKT) serves as a coordination point for ATP.

Belongs to the ATPase alpha/beta chains family. In terms of assembly, F-type ATPases have 2 components, CF(1) - the catalytic core - and CF(0) - the membrane proton channel. CF(1) has five subunits: alpha(3), beta(3), gamma(1), delta(1), epsilon(1). CF(0) has four main subunits: a(1), b(1), b'(1) and c(9-12).

The protein resides in the plastid. It is found in the chloroplast thylakoid membrane. The catalysed reaction is ATP + H2O + 4 H(+)(in) = ADP + phosphate + 5 H(+)(out). In terms of biological role, produces ATP from ADP in the presence of a proton gradient across the membrane. The catalytic sites are hosted primarily by the beta subunits. The chain is ATP synthase subunit beta, chloroplastic from Ostreococcus tauri.